A 1151-amino-acid polypeptide reads, in one-letter code: Protein kinase C-like 1 (1151 aa).

2 REM-1 domains span residues 1–67 and 106–183; these read MSFS…KTAQ and KYDC…INVD. Positions 64-88 are disordered; sequence KTAQQSQGENGSEDNERCNSKEYGF. The region spanning 190 to 309 is the C2 domain; sequence QPNDIMDNQQ…IRKKKAGQTN (120 aa). S226 carries the post-translational modification Phosphoserine. The segment at 306 to 331 is disordered; that stretch reads GQTNEQQGWVNASNINGGSSLASEEG. 2 Phorbol-ester/DAG-type zinc fingers span residues 414–461 and 481–531; these read GHHF…VTKC and PHRF…PDFC. Disordered regions lie at residues 546 to 620 and 649 to 669; these read QDTK…IIDK and AQQTAEFSSPEKTLDPTSNRR. The span at 560–577 shows a compositional bias: polar residues; sequence PSAQLGSSIGTANGSDLS. Residues 605–620 are compositionally biased toward basic and acidic residues; sequence VGRDSPTKQHDPIIDK. The residue at position 761 (S761) is a Phosphoserine. A disordered region spans residues 782 to 816; sequence LAPTSTHASRTTDQQSPQKSQTSTSAKHKKRAAKR. The span at 792–806 shows a compositional bias: low complexity; that stretch reads TTDQQSPQKSQTSTS. Residues 807–816 show a composition bias toward basic residues; that stretch reads AKHKKRAAKR. Positions 824-1083 constitute a Protein kinase domain; that stretch reads FVLLKVLGKG…ADEVMEEPFF (260 aa). ATP-binding positions include 830-838 and K853; that span reads LGKGNFGKV. D949 functions as the Proton acceptor in the catalytic mechanism. The 68-residue stretch at 1084-1151 folds into the AGC-kinase C-terminal domain; the sequence is RNINFDDILN…FSFMPDDLDL (68 aa).

It belongs to the protein kinase superfamily. AGC Ser/Thr protein kinase family. PKC subfamily.

The enzyme catalyses L-seryl-[protein] + ATP = O-phospho-L-seryl-[protein] + ADP + H(+). It carries out the reaction L-threonyl-[protein] + ATP = O-phospho-L-threonyl-[protein] + ADP + H(+). In terms of biological role, required for cell growth and for the G2-&gt;M transition of the cell division cycle. Mediates a protein kinase cascade; it activates BCK1 which itself activates MKK1/MKK2. This chain is Protein kinase C-like 1 (PKC1), found in Saccharomyces cerevisiae (strain ATCC 204508 / S288c) (Baker's yeast).